The primary structure comprises 449 residues: Tubulin alpha-1B chain (449 aa).

Glutamine 11 provides a ligand contact to GTP. Residue lysine 40 is modified to N6-acetyllysine. The GTP site is built by glutamate 71, serine 140, glycine 144, threonine 145, threonine 179, asparagine 206, and asparagine 228. Glutamate 71 lines the Mg(2+) pocket. Residue glutamate 254 is part of the active site.

Belongs to the tubulin family. As to quaternary structure, dimer of alpha and beta chains. A typical microtubule is a hollow water-filled tube with an outer diameter of 25 nm and an inner diameter of 15 nM. Alpha-beta heterodimers associate head-to-tail to form protofilaments running lengthwise along the microtubule wall with the beta-tubulin subunit facing the microtubule plus end conferring a structural polarity. Microtubules usually have 13 protofilaments but different protofilament numbers can be found in some organisms and specialized cells. Mg(2+) serves as cofactor. Post-translationally, acetylation of alpha chains at Lys-40 stabilizes microtubules and affects affinity and processivity of microtubule motors. This modification has a role in multiple cellular functions, ranging from cell motility, cell cycle progression or cell differentiation to intracellular trafficking and signaling.

The protein localises to the cytoplasm. Its subcellular location is the cytoskeleton. It localises to the spindle. It is found in the nucleus. It catalyses the reaction GTP + H2O = GDP + phosphate + H(+). Functionally, tubulin is the major constituent of microtubules, a cylinder consisting of laterally associated linear protofilaments composed of alpha- and beta-tubulin heterodimers. Microtubules grow by the addition of GTP-tubulin dimers to the microtubule end, where a stabilizing cap forms. Below the cap, tubulin dimers are in GDP-bound state, owing to GTPase activity of alpha-tubulin. The sequence is that of Tubulin alpha-1B chain (ALTBN) from Physarum polycephalum (Slime mold).